The primary structure comprises 184 residues: Endothelial cell-specific molecule 1 (184 aa).

A signal peptide spans 1 to 21 (MKSLLLLTTLLVPLHLGMAWS). The region spanning 24 to 102 (YAVDCPEHCD…GDEFGICKDC (79 aa)) is the IGFBP N-terminal domain. 6 disulfides stabilise this stretch: cysteine 28-cysteine 51, cysteine 32-cysteine 53, cysteine 37-cysteine 54, cysteine 43-cysteine 57, cysteine 65-cysteine 83, and cysteine 77-cysteine 99. Positions 145 to 184 (RTSASHTERDSASGDGNAVREEIGEGNAARPSVMKWLNPR) are disordered. The span at 150-167 (HTERDSASGDGNAVREEI) shows a compositional bias: basic and acidic residues. An O-linked (Xyl...) (chondroitin sulfate) serine glycan is attached at serine 157.

Post-translationally, O-glycosylated; contains chondroitin sulfate and dermatan sulfate.

It is found in the secreted. Its function is as follows. Involved in angiogenesis; promotes angiogenic sprouting. May have potent implications in lung endothelial cell-leukocyte interactions. The polypeptide is Endothelial cell-specific molecule 1 (Esm1) (Mus musculus (Mouse)).